An 82-amino-acid polypeptide reads, in one-letter code: Protein Vpu (82 aa).

Topologically, residues 1–7 are extracellular; it reads MQPIPIV. A helical transmembrane segment spans residues 8-28; sequence AIVALVVAIIIAIVVWSIVII. Topologically, residues 29-82 are cytoplasmic; it reads EYRKILRQRKIDRLIDRLIERAEDSGNESEGEISALVEMGVEMGHHAPWDVDDL. Phosphoserine; by host CK2 occurs at positions 53 and 57.

Belongs to the HIV-1 VPU protein family. As to quaternary structure, homopentamer. Interacts with host CD4 and BRTC; these interactions induce proteasomal degradation of CD4. Interacts (via transmembrane region) with host BST2 (via transmembrane region); this interaction leads to the degradation of host BST2. Interacts with host FBXW11. Interacts with host AP1M1; this interaction plays a role in the mistrafficking and subsequent degradation of host BST2. Interacts with host RANBP2; this interaction allows Vpu to down-regulate host BLM sumoylation. Phosphorylated by host CK2. This phosphorylation is necessary for interaction with human BTRC and degradation of CD4.

It is found in the host membrane. With respect to regulation, ion channel activity is inhibited by hexamethylene amiloride in vitro. Enhances virion budding by targeting host CD4 and Tetherin/BST2 to proteasome degradation. Degradation of CD4 prevents any unwanted premature interactions between viral Env and its host receptor CD4 in the endoplasmic reticulum. Degradation of antiretroviral protein Tetherin/BST2 is important for virion budding, as BST2 tethers new viral particles to the host cell membrane. Mechanistically, Vpu bridges either CD4 or BST2 to BTRC, a substrate recognition subunit of the Skp1/Cullin/F-box protein E3 ubiquitin ligase, induces their ubiquitination and subsequent proteasomal degradation. The alteration of the E3 ligase specificity by Vpu seems to promote the degradation of host IKBKB, leading to NF-kappa-B down-regulation and subsequent apoptosis. Acts as a viroporin that forms an oligomeric ion channel in membranes. Modulates the host DNA repair mechanisms to promote degradation of nuclear viral cDNA in cells that are already productively infected in order to suppress immune sensing and proviral hyper-integration (superinfection). Manipulates PML-NBs and modulates SUMOylation of host BLM protein thereby enhancing its DNA-end processing activity toward viral unintegrated linear DNA. Also inhibits RAD52-mediated homologous repair of viral cDNA, preventing the generation of dead-end circular forms of single copies of the long terminal repeat and permitting sustained nucleolytic attack. The sequence is that of Protein Vpu from Human immunodeficiency virus type 1 group M subtype B (isolate HXB2) (HIV-1).